Consider the following 512-residue polypeptide: Serine/threonine-protein kinase BSK1 (512 aa).

Glycine 2 is lipidated: N-myristoyl glycine. Residues 8-48 are disordered; it reads FSGDNPLGKDGVQPQPLSQNNHGGATTADNGGSGGASGVGG. A compositionally biased stretch (gly residues) spans 38-48; the sequence is GGSGGASGVGG. The Protein kinase domain maps to 76-331; sequence DNIVSESGEK…DLVATLAPLQ (256 aa). Residues 82–90 and lysine 104 each bind ATP; that span reads SGEKAPNLV. Aspartate 198 functions as the Proton acceptor in the catalytic mechanism. Serine 230 carries the post-translational modification Phosphoserine. Residues 483–508 are a coiled coil; the sequence is AKLNMNTDAADMLNEAAQLEEKRQRG.

The protein belongs to the protein kinase superfamily. Ser/Thr protein kinase family. Interacts with BRI1. Interacts with ASK7/BIN2, BSK5, BSK6, BSK8 and BSK11. Interacts with FLS2. Phosphorylated at Ser-230 by BRI1 upon brassinolide (BL) treatment. Phosphorylation at Ser-230 weakens the interaction between BSK1 and BRI1. Phosphorylated by ASK7/BIN2 and ASK9/BIL2.

The protein localises to the cell membrane. It catalyses the reaction L-seryl-[protein] + ATP = O-phospho-L-seryl-[protein] + ADP + H(+). The catalysed reaction is L-threonyl-[protein] + ATP = O-phospho-L-threonyl-[protein] + ADP + H(+). Functionally, serine/threonine kinase that acts as a positive regulator of brassinosteroid (BR) signaling downstream of the receptor kinase BRI1. Mediates signal transduction from BRI1 by functioning as substrate of BRI1. Functions as a positive regulator of plant immunity. May be involved in the regulation of pattern-triggered immunity (PTI) downstream of the flagellin receptor FLS2. Possesses kinase activity in vitro. Kinase activity is required for its function in innate immunity. The chain is Serine/threonine-protein kinase BSK1 from Arabidopsis thaliana (Mouse-ear cress).